Reading from the N-terminus, the 423-residue chain is MSIQIPRGTQDILPGSVELWQYIEGQAREICRRYNYKEIRTPIFEHTELFLRGVGDTTDIVQKEMYTFQDRGDRSLTLRPEGTAPVVRSYVENKMFGDATQPTKLYYIGQMFRYERPQAGRYRQFVQFGIEAIGSNDPAIDAEVIALAVEFYRGMGLKNIKVVLNSLGDPASRQAHREALIAHFKPRIGEFCSDCQSRLEKNPLRILDCKRDRDHELMNTAPSITDYLNEESTAYYEKVQELLTMMGVPFEKDPNLVRGLDYYQHTVFEIMSEAEGFGAITTLSGGGRYNGLVQEIGGPEMPGIGFAMSIERLIMALKAENIELPIENTIDCYVVALGDKAKDHAAKVAFDLRKSGLSVEKDYLNRKMKAQFKSADRLNAKYVAVLGEDELDKGVINLKDMATGEQEEVALDVFASYIAEKLI.

This sequence belongs to the class-II aminoacyl-tRNA synthetase family. As to quaternary structure, homodimer.

The protein localises to the cytoplasm. It catalyses the reaction tRNA(His) + L-histidine + ATP = L-histidyl-tRNA(His) + AMP + diphosphate + H(+). The sequence is that of Histidine--tRNA ligase from Bacillus cytotoxicus (strain DSM 22905 / CIP 110041 / 391-98 / NVH 391-98).